A 236-amino-acid chain; its full sequence is Protein-L-isoaspartate O-methyltransferase 1 (236 aa).

Residue S86 is part of the active site.

The protein belongs to the methyltransferase superfamily. L-isoaspartyl/D-aspartyl protein methyltransferase family.

It localises to the cytoplasm. It carries out the reaction [protein]-L-isoaspartate + S-adenosyl-L-methionine = [protein]-L-isoaspartate alpha-methyl ester + S-adenosyl-L-homocysteine. Catalyzes the methyl esterification of L-isoaspartyl residues in peptides and proteins that result from spontaneous decomposition of normal L-aspartyl and L-asparaginyl residues. It plays a role in the repair and/or degradation of damaged proteins. The chain is Protein-L-isoaspartate O-methyltransferase 1 from Nitrosospira multiformis (strain ATCC 25196 / NCIMB 11849 / C 71).